We begin with the raw amino-acid sequence, 318 residues long: Protoheme IX farnesyltransferase (318 aa).

9 helical membrane-spanning segments follow: residues 29–49, 51–71, 102–122, 123–143, 151–171, 179–199, 219–239, 241–261, and 280–300; these read IIPL…QGQV, PVLL…AQTI, LIFA…FANL, LAAS…THWL, IVIG…AVTG, LIFA…ALMI, ATVK…LLLV, PLHS…AVFI, and LFLY…IDSL.

Belongs to the UbiA prenyltransferase family. Protoheme IX farnesyltransferase subfamily.

It localises to the cell inner membrane. It carries out the reaction heme b + (2E,6E)-farnesyl diphosphate + H2O = Fe(II)-heme o + diphosphate. The protein operates within porphyrin-containing compound metabolism; heme O biosynthesis; heme O from protoheme: step 1/1. Converts heme B (protoheme IX) to heme O by substitution of the vinyl group on carbon 2 of heme B porphyrin ring with a hydroxyethyl farnesyl side group. The polypeptide is Protoheme IX farnesyltransferase (Trichormus variabilis (strain ATCC 29413 / PCC 7937) (Anabaena variabilis)).